We begin with the raw amino-acid sequence, 90 residues long: Elongation factor 1-beta (90 aa).

The protein belongs to the EF-1-beta/EF-1-delta family.

Its function is as follows. Promotes the exchange of GDP for GTP in EF-1-alpha/GDP, thus allowing the regeneration of EF-1-alpha/GTP that could then be used to form the ternary complex EF-1-alpha/GTP/AAtRNA. This chain is Elongation factor 1-beta, found in Desulfurococcus amylolyticus (strain DSM 18924 / JCM 16383 / VKM B-2413 / 1221n) (Desulfurococcus kamchatkensis).